Reading from the N-terminus, the 450-residue chain is Sulfite exporter TauE/SafE family protein 1 (450 aa).

12 helical membrane passes run 5–25, 48–68, 70–90, 97–117, 130–150, 153–173, 223–243, 261–281, 316–336, 340–360, 378–398, and 408–428; these read LVPL…SALA, TIEV…AASI, SAGG…IAGL, SFSA…NLFL, FDLA…GVIC, MFPN…STMK, FPWM…SINL, ALYW…TLCI, VMAL…GMLI, LLQI…MVLF, GTAA…LMVV, and ASII…LMTT.

The protein belongs to the 4-toluene sulfonate uptake permease (TSUP) (TC 2.A.102) family.

It localises to the membrane. This Arabidopsis thaliana (Mouse-ear cress) protein is Sulfite exporter TauE/SafE family protein 1.